A 430-amino-acid polypeptide reads, in one-letter code: Potassium channel subfamily K member 12 (430 aa).

The Cytoplasmic segment spans residues 1-38 (MSSRSPRPPPRRCRRRLPRPSCCCCCCRRSHLNEDTGR). The interval 11–16 (RRCRRR) is ER retention/retrieval signal. A helical membrane pass occupies residues 39-59 (FVLLAALIGLYLVAGATVFSA). A glycan (N-linked (GlcNAc...) asparagine) is linked at Asn-78. The segment at residues 114–134 (WDFPGAFYFVGTVVSTIGFGM) is an intramembrane region (pore-forming). K(+) is bound by residues Thr-129, Ile-130, and Gly-131. The selectivity filter 1 stretch occupies residues 129-134 (TIGFGM). Residues 145 to 165 (FLIAYGLFGCAGTILFFNLFL) form a helical membrane-spanning segment. Over 166–212 (ERIISLLAFIMRACRERQLRRSGLLPATFRRGSALSEADSLAGWKPS) the chain is Cytoplasmic. The helical transmembrane segment at 213 to 233 (VYHVLLILGLFAVLLACCASA) threads the bilayer. The segment at residues 243-263 (YVDSLYFCFVTFSTIGFGDLV) is an intramembrane region (pore-forming). 4 residues coordinate K(+): Thr-256, Ile-257, Gly-258, and Phe-259. Residues 256–261 (TIGFGD) are selectivity filter 2. Residues 282–302 (LFILLGVCCIYSLFNVISILI) traverse the membrane as a helical segment. Residues 303–430 (KQVLNWMLRK…NRLAETSASR (128 aa)) are Cytoplasmic-facing.

Belongs to the two pore domain potassium channel (TC 1.A.1.8) family. Homodimer. Heterodimer with KCNK13. Highly expressed in most brain regions. Also expressed in other tissues such as lung, kidney, liver, stomach and spleen.

It localises to the cell membrane. The protein resides in the endoplasmic reticulum membrane. It carries out the reaction K(+)(in) = K(+)(out). In terms of biological role, k(+) channel subunit that may homo- and heterodimerize to form functional channels with distinct regulatory and gating properties. Can heterodimerize with KCNK13 subunit to conduct K(+) outward rectifying currents at the plasma membrane. The homodimers are mainly retained in the endoplasmic reticulum compartment and may be targeted to the cell surface upon phosphorylation or other activation signals yet to be elucidated. In Rattus norvegicus (Rat), this protein is Potassium channel subfamily K member 12 (Kcnk12).